The primary structure comprises 153 residues: Inner membrane protein YjiG (153 aa).

At 1–31 (MTTQVRKNVMDMFIDGARRGFTIATTNLLPN) the chain is on the periplasmic side. The helical transmembrane segment at 32-52 (VVMAFVIIQALKITGLLDWVG) threads the bilayer. Residues 53 to 68 (HICEPVMALWGLPGEA) are Cytoplasmic-facing. 2 consecutive transmembrane segments (helical) span residues 69–89 (ATVLLAALMSMGGAVGVAASL) and 90–110 (ATAGALTGHDVTVLLPAMYLM). Over 111–132 (GNPVQNVGRCLGTAEVNAKYYP) the chain is Cytoplasmic. The helical transmembrane segment at 133–153 (HIITVCVINALLSIWVMQLIV) threads the bilayer.

It belongs to the SpmB family.

Its subcellular location is the cell inner membrane. The polypeptide is Inner membrane protein YjiG (yjiG) (Escherichia coli O157:H7).